Reading from the N-terminus, the 402-residue chain is Multidrug resistance protein MdtH (402 aa).

10 helical membrane-spanning segments follow: residues Tyr13–Ile33, Ser34–Leu54, Pro99–Phe116, Leu139–Leu159, Tyr165–Leu185, Val214–Met234, Ala244–Ala264, Leu277–Leu297, Leu340–Gly360, and Leu368–Phe388.

This sequence belongs to the major facilitator superfamily. DHA1 family. MdtH (TC 2.A.1.2.21) subfamily.

The protein localises to the cell inner membrane. The protein is Multidrug resistance protein MdtH of Edwardsiella ictaluri (strain 93-146).